We begin with the raw amino-acid sequence, 313 residues long: tRNA dimethylallyltransferase (313 aa).

17–24 (GPTASGKT) lines the ATP pocket. 19–24 (TASGKT) serves as a coordination point for substrate. 3 interaction with substrate tRNA regions span residues 42-45 (DSAL), 166-170 (QRLSR), and 247-252 (RCVGYR).

It belongs to the IPP transferase family. In terms of assembly, monomer. Mg(2+) is required as a cofactor.

The catalysed reaction is adenosine(37) in tRNA + dimethylallyl diphosphate = N(6)-dimethylallyladenosine(37) in tRNA + diphosphate. Functionally, catalyzes the transfer of a dimethylallyl group onto the adenine at position 37 in tRNAs that read codons beginning with uridine, leading to the formation of N6-(dimethylallyl)adenosine (i(6)A). The protein is tRNA dimethylallyltransferase of Pectobacterium atrosepticum (strain SCRI 1043 / ATCC BAA-672) (Erwinia carotovora subsp. atroseptica).